The following is a 174-amino-acid chain: Centrosomal protein 20 (174 aa).

The interval methionine 1 to isoleucine 104 is necessary and sufficient for homooligomerization and localization to centrosomes and pericentriolar satellites. In terms of domain architecture, LisH spans glutamate 49 to valine 81. The interval threonine 136–arginine 174 is disordered. Serine 144 is modified (phosphoserine). Positions arginine 145–glycine 157 are enriched in basic and acidic residues.

Belongs to the CEP43 family. Homooligomer; probably required for localization to centrosomes. Forms a complex with KIAA0753/OFIP and OFD1; within this complex may stabilize the interaction between OFD1 and KIAA0753/OFIP. Interacts with PCM1; this interaction may be mediated by KIAA0753/OFIP.

Its subcellular location is the cytoplasm. The protein resides in the cytoskeleton. The protein localises to the microtubule organizing center. It localises to the centrosome. It is found in the centriole. Its subcellular location is the cell projection. The protein resides in the cilium. The protein localises to the cilium basal body. It localises to the cytoplasmic granule. It is found in the centriolar satellite. Its function is as follows. Involved in the biogenesis of cilia. Required for the recruitment of PLK1 to centrosomes and S phase progression. The protein is Centrosomal protein 20 of Mus musculus (Mouse).